A 95-amino-acid chain; its full sequence is MKFLLLVLAALRFLTQVIPASAGGSKCVSNTPGYCRTYCHQGETALFMCNASRKCCVSYSFLPKPDLPQLIGNHWQSRRRNTQRKDKKQQTTVTS.

An N-terminal signal peptide occupies residues 1–22; sequence MKFLLLVLAALRFLTQVIPASA. 3 cysteine pairs are disulfide-bonded: Cys27-Cys55, Cys35-Cys49, and Cys39-Cys56. The segment at 72–95 is disordered; it reads GNHWQSRRRNTQRKDKKQQTTVTS. The segment covering 76-87 has biased composition (basic residues); sequence QSRRRNTQRKDK.

The protein belongs to the beta-defensin family.

It is found in the secreted. Functionally, has antibacterial activity. In Pongo pygmaeus (Bornean orangutan), this protein is Beta-defensin 132 (DEFB132).